Here is an 83-residue protein sequence, read N- to C-terminus: Kunitz-type serine protease inhibitor carinatin-1 (83 aa).

The signal sequence occupies residues 1 to 24 (MSSGGLLLLLGLLTLWEGLTPVSS). Residues 31–81 (CELPDDRGPCRGIFHAFYYNPDQRQCLEFIYGGCYGNANNFKTIDECERTC) enclose the BPTI/Kunitz inhibitor domain. 3 disulfide bridges follow: cysteine 31-cysteine 81, cysteine 40-cysteine 64, and cysteine 56-cysteine 77.

It belongs to the venom Kunitz-type family. Expressed by the venom gland.

It is found in the secreted. In terms of biological role, serine protease inhibitor. The sequence is that of Kunitz-type serine protease inhibitor carinatin-1 from Tropidechis carinatus (Australian rough-scaled snake).